We begin with the raw amino-acid sequence, 277 residues long: Raffinose operon transcriptional regulatory protein RafR (277 aa).

The 99-residue stretch at 176 to 274 (NLAVSYLQEN…GASPSYYRKS (99 aa)) folds into the HTH araC/xylS-type domain. 2 DNA-binding regions (H-T-H motif) span residues 193–214 (MDLC…KTHA) and 241–264 (VQSI…KRYS).

Its function is as follows. Involved in the regulation of the raffinose-operon. This is Raffinose operon transcriptional regulatory protein RafR (rafR) from Pediococcus pentosaceus.